Here is a 101-residue protein sequence, read N- to C-terminus: Small ribosomal subunit protein uS14 (101 aa).

Residues 1–10 (MAKKSSIEKN) are compositionally biased toward basic and acidic residues. The segment at 1–23 (MAKKSSIEKNNRRKRMVKNAAPK) is disordered.

Belongs to the universal ribosomal protein uS14 family. Part of the 30S ribosomal subunit. Contacts proteins S3 and S10.

In terms of biological role, binds 16S rRNA, required for the assembly of 30S particles and may also be responsible for determining the conformation of the 16S rRNA at the A site. This chain is Small ribosomal subunit protein uS14, found in Bradyrhizobium diazoefficiens (strain JCM 10833 / BCRC 13528 / IAM 13628 / NBRC 14792 / USDA 110).